Reading from the N-terminus, the 344-residue chain is Fructose-1,6-bisphosphatase class 1 (344 aa).

Mg(2+) is bound by residues glutamate 107, aspartate 129, leucine 131, and aspartate 132. The substrate site is built by asparagine 224, tyrosine 252, and lysine 282. Glutamate 288 lines the Mg(2+) pocket.

This sequence belongs to the FBPase class 1 family. In terms of assembly, homotetramer. Requires Mg(2+) as cofactor.

Its subcellular location is the cytoplasm. It catalyses the reaction beta-D-fructose 1,6-bisphosphate + H2O = beta-D-fructose 6-phosphate + phosphate. It functions in the pathway carbohydrate biosynthesis; Calvin cycle. The sequence is that of Fructose-1,6-bisphosphatase class 1 from Synechococcus sp. (strain ATCC 27144 / PCC 6301 / SAUG 1402/1) (Anacystis nidulans).